Consider the following 155-residue polypeptide: SsrA-binding protein (155 aa).

It belongs to the SmpB family.

Its subcellular location is the cytoplasm. In terms of biological role, required for rescue of stalled ribosomes mediated by trans-translation. Binds to transfer-messenger RNA (tmRNA), required for stable association of tmRNA with ribosomes. tmRNA and SmpB together mimic tRNA shape, replacing the anticodon stem-loop with SmpB. tmRNA is encoded by the ssrA gene; the 2 termini fold to resemble tRNA(Ala) and it encodes a 'tag peptide', a short internal open reading frame. During trans-translation Ala-aminoacylated tmRNA acts like a tRNA, entering the A-site of stalled ribosomes, displacing the stalled mRNA. The ribosome then switches to translate the ORF on the tmRNA; the nascent peptide is terminated with the 'tag peptide' encoded by the tmRNA and targeted for degradation. The ribosome is freed to recommence translation, which seems to be the essential function of trans-translation. In Streptococcus equi subsp. zooepidemicus (strain MGCS10565), this protein is SsrA-binding protein.